The following is a 292-amino-acid chain: AKT-interacting protein homolog B (292 aa).

The tract at residues 1 to 44 is disordered; sequence MNPFWNMPSASVRKRSDNDEKIATADQKISPARSSSAKKQLPSI. Basic and acidic residues predominate over residues 14 to 23; sequence KRSDNDEKIA. The UBC core domain occupies 75-223; that stretch reads YLEYSLLAEF…VVDSVKLCNS (149 aa).

The protein belongs to the ubiquitin-conjugating enzyme family. FTS subfamily.

The protein localises to the cytoplasm. It is found in the cell membrane. Functionally, may function to promote vesicle trafficking and/or fusion. May also regulate apoptosis. In Xenopus laevis (African clawed frog), this protein is AKT-interacting protein homolog B (aktip-b).